We begin with the raw amino-acid sequence, 268 residues long: tRNA (guanine-N(1)-)-methyltransferase (268 aa).

S-adenosyl-L-methionine-binding positions include Gly-113 and 133–138; that span reads IGDYVL. Residues 238–268 form a disordered region; sequence RCPPDPFAHQGPVYEGDQLERPEGGEQGASR.

It belongs to the RNA methyltransferase TrmD family. Homodimer.

The protein localises to the cytoplasm. The enzyme catalyses guanosine(37) in tRNA + S-adenosyl-L-methionine = N(1)-methylguanosine(37) in tRNA + S-adenosyl-L-homocysteine + H(+). In terms of biological role, specifically methylates guanosine-37 in various tRNAs. This chain is tRNA (guanine-N(1)-)-methyltransferase, found in Thermomicrobium roseum (strain ATCC 27502 / DSM 5159 / P-2).